The following is a 125-amino-acid chain: RutC family protein STK_08110 (125 aa).

This sequence belongs to the RutC family.

The sequence is that of RutC family protein STK_08110 from Sulfurisphaera tokodaii (strain DSM 16993 / JCM 10545 / NBRC 100140 / 7) (Sulfolobus tokodaii).